Reading from the N-terminus, the 178-residue chain is Translation initiation factor IF-3 (178 aa).

Belongs to the IF-3 family. In terms of assembly, monomer.

It is found in the cytoplasm. In terms of biological role, IF-3 binds to the 30S ribosomal subunit and shifts the equilibrium between 70S ribosomes and their 50S and 30S subunits in favor of the free subunits, thus enhancing the availability of 30S subunits on which protein synthesis initiation begins. The polypeptide is Translation initiation factor IF-3 (Nautilia profundicola (strain ATCC BAA-1463 / DSM 18972 / AmH)).